A 253-amino-acid chain; its full sequence is Chromosome-partitioning ATPase Soj (253 aa).

Positions 11, 12, 13, 14, 15, 16, 17, 18, 211, and 213 each coordinate ATP. Thr-17 contacts Mg(2+).

Belongs to the ParA family.

The catalysed reaction is ATP + H2O = ADP + phosphate + H(+). Its function is as follows. ATPase probably involved in chromosome partitioning. Cooperatively binds dsDNA, forming nucleoprotein filaments in a strictly ATP-dependent fashion. The protein is Chromosome-partitioning ATPase Soj of Treponema pallidum (strain Nichols).